An 823-amino-acid polypeptide reads, in one-letter code: MAFSQVQCLDDNHVNWRSSESKPEFFYSEEQRLALEALVARGRDAFYEVLKRENIRDFLSELELKRILETIEVYDPGSEDPRGTGPSQGPEDNGVGDGEEASGADGVPIEAEPLPSLEYWPQKSDRSIPQLDLGWPDTIAYRGVTRASVYMQPPIDGQAHIKEVVRKMISQAQKVIAVVMDMFTDVDIFKDLLDAGFKRKVAVYIIVDESNVKYFLHMCERACMHLGHLKNLRVRSSGGTEFFTRSATKFKGALAQKFMFVDGDRAVCGSYSFTWSAARTDRNVISVLSGQVVEMFDRQFQELYLMSHSVSLKGIPMEKEPEPEPIVLPSVVPLVPAGTVAKKLVNPKYALVKAKSVDEIAKISSEKQEAKKPLGLKGPALAEHPGELPELLPPIHPGLLHLERANMFEYLPTWVEPDPEPGSDILGYINIIDPNIWNPQPSQMNRIKIRDTSQASAQHQLWKQSQDSRPRPEPCPPPEPSAPQDGVPAENGLPQGDPEPLPPVPKPRTVPVADVLARDSSDIGWVLELPKEEAPQNGTDHRLPRMAGPGHAPLQRQLSVTQDDPESLGVGLPNGLDGVEEEDDDDYVTLSDQDSHSGSSGRGPGPRRPSVASSVSEEYFEVREHSVPLRRRHSEQVANGPTPPPRRQLSAPHITRGTFVGPQGGSPWAQSRGREEADALKRMQAQRSTDKEAQGQQFHHHRVPASGTRDKDGFPGPPRYRSAADSVQSSTRNAGPAMAGPHHWQAKGGQVPRLLPDPGSPRLAQNARPMTDGRATEEHPSPFGIPYSKLSQSKHLKARTGGSQWASSDSKRRAQAPRDRKDP.

Position 2 is an N-acetylalanine (Ala2). Positions 2 to 312 (AFSQVQCLDD…LYLMSHSVSL (311 aa)) are DUF1669. Ser4 is modified (phosphoserine). Positions 75–108 (DPGSEDPRGTGPSQGPEDNGVGDGEEASGADGVP) are disordered. Phosphoserine is present on residues Ser124, Ser127, and Ser356. The disordered stretch occupies residues 450 to 823 (RDTSQASAQH…AQAPRDRKDP (374 aa)). Residues 452–465 (TSQASAQHQLWKQS) show a composition bias toward polar residues. Over residues 497–508 (DPEPLPPVPKPR) the composition is skewed to pro residues. A compositionally biased stretch (basic and acidic residues) spans 529–543 (LPKEEAPQNGTDHRL). Acidic residues predominate over residues 578-587 (GVEEEDDDDY). 5 positions are modified to phosphoserine: Ser610, Ser614, Ser616, Ser650, and Ser666. 2 stretches are compositionally biased toward basic and acidic residues: residues 672 to 681 (RGREEADALK) and 809 to 823 (DSKR…RKDP).

It belongs to the FAM83 family. In terms of assembly, interacts with SMAD1 (via MH2 domain); in a SMAD4-independent manner. Directly interacts (via DUF1669) with casein kinase isoforms CSNK1A1 and CSNK1A1L. In terms of processing, phosphorylated in vitro by CSNK1A1. Post-translationally, BMP signaling induces the phosphorylation by BMPR1A at Ser-610, Ser-614 and Ser-616. Phosphorylation at Ser-610 is necessary for the activation of SMAD4-independent BMP target genes such as NEDD9 and ASNS.

Its subcellular location is the cytoplasm. It localises to the cytosol. The protein resides in the nucleus. Functionally, substrate for type I BMP receptor kinase involved in regulation of some target genes of the BMP signaling pathway. Also regulates the expression of several non-BMP target genes, suggesting a role in other signaling pathways. This is Protein FAM83G (FAM83G) from Homo sapiens (Human).